We begin with the raw amino-acid sequence, 498 residues long: MASQGTKRSYEQMETGGERQDATEIRASVGRMIGGIGRFYIQMCTELKLSDYEGRLIQNSITIERMVLSAFDERRNKYLEEHPSAGKDPKKTGGPIYRRIDGKWMRELILYDKEEIRRVWRQANNGEDATAGLTHIMIWHSNLNDATYQRTRALVRTGMDPRMCSLMQGSTLPRRSGAAGAAVKGVGTIVMELIRMIKRGINDRNFWRGENGRRTRIAYERMCNILKGKFQTAAQRAMMDQVRESRNPGNAEIEDLIFLARSALILRGSVAHKSCLPACVYGLAVASGHDFEREGYSLVGIEPFKLLQNSQVFSLIRPNENPAHKSQLVWMACHSAAFEDLRVSGFIRGKRVVPRGKLSTRGVQIASNENVEAMDSSTLELRSRYWAIRTRSGGNTNQQKASAGQISVQPTFSVQRNLPFERATVMAAFVGNNEGRTSDMRTEIIRMMESAKPEDLSFQGRGVFELSDEKATNPIVPSFDMNNEGSYFFGDNAEEYDN.

The Unconventional nuclear localization signal signature appears at 1–18; the sequence is MASQGTKRSYEQMETGGE. Positions 1 to 22 are disordered; the sequence is MASQGTKRSYEQMETGGERQDA. A compositionally biased stretch (basic and acidic residues) spans 8–22; that stretch reads RSYEQMETGGERQDA. The Bipartite nuclear localization signal signature appears at 198-216; that stretch reads KRGINDRNFWRGENGRRTR.

This sequence belongs to the influenza viruses nucleoprotein family. Homomultimerizes to form the nucleocapsid. May bind host exportin-1/XPO1. Binds to viral genomic RNA. Protein-RNA contacts are mediated by a combination of electrostatic interactions between positively charged residues and the phosphate backbone and planar interactions between aromatic side chains and bases. Late in virus-infected cells, may be cleaved from a 56-kDa protein to a 53-kDa protein by a cellular caspase. This cleavage might be a marker for the onset of apoptosis in infected cells or have a specific function in virus host interaction.

The protein resides in the virion. The protein localises to the host nucleus. In terms of biological role, encapsidates the negative strand viral RNA, protecting it from nucleases. The encapsidated genomic RNA is termed the ribonucleoprotein (RNP) and serves as template for transcription and replication. The RNP needs to be localized in the host nucleus to start an infectious cycle, but is too large to diffuse through the nuclear pore complex. NP comprises at least 2 nuclear localization signals that are responsible for the active RNP import into the nucleus through cellular importin alpha/beta pathway. Later in the infection, nclear export of RNPs are mediated through viral proteins NEP interacting with M1 which binds nucleoproteins. It is possible that nucleoprotein binds directly host exportin-1/XPO1 and plays an active role in RNPs nuclear export. M1 interaction with RNP seems to hide nucleoprotein's nuclear localization signals. Soon after a virion infects a new cell, M1 dissociates from the RNP under acidification of the virion driven by M2 protein. Dissociation of M1 from RNP unmasks nucleoprotein's nuclear localization signals, targeting the RNP to the nucleus. This Aves (Human) protein is Nucleoprotein.